Consider the following 75-residue polypeptide: Small ribosomal subunit protein bS18 (75 aa).

This sequence belongs to the bacterial ribosomal protein bS18 family. In terms of assembly, part of the 30S ribosomal subunit. Forms a tight heterodimer with protein bS6.

Functionally, binds as a heterodimer with protein bS6 to the central domain of the 16S rRNA, where it helps stabilize the platform of the 30S subunit. In Chromobacterium violaceum (strain ATCC 12472 / DSM 30191 / JCM 1249 / CCUG 213 / NBRC 12614 / NCIMB 9131 / NCTC 9757 / MK), this protein is Small ribosomal subunit protein bS18.